The primary structure comprises 298 residues: 4-diphosphocytidyl-2-C-methyl-D-erythritol kinase (298 aa).

Residue lysine 25 is part of the active site. Residue 109 to 119 (PVGGGFGGGSS) coordinates ATP. Aspartate 151 is a catalytic residue.

Belongs to the GHMP kinase family. IspE subfamily.

The catalysed reaction is 4-CDP-2-C-methyl-D-erythritol + ATP = 4-CDP-2-C-methyl-D-erythritol 2-phosphate + ADP + H(+). Its pathway is isoprenoid biosynthesis; isopentenyl diphosphate biosynthesis via DXP pathway; isopentenyl diphosphate from 1-deoxy-D-xylulose 5-phosphate: step 3/6. Catalyzes the phosphorylation of the position 2 hydroxy group of 4-diphosphocytidyl-2C-methyl-D-erythritol. The sequence is that of 4-diphosphocytidyl-2-C-methyl-D-erythritol kinase from Xylella fastidiosa (strain 9a5c).